The chain runs to 198 residues: Large ribosomal subunit protein bL25 (198 aa).

It belongs to the bacterial ribosomal protein bL25 family. CTC subfamily. Part of the 50S ribosomal subunit; part of the 5S rRNA/L5/L18/L25 subcomplex. Contacts the 5S rRNA. Binds to the 5S rRNA independently of L5 and L18.

Functionally, this is one of the proteins that binds to the 5S RNA in the ribosome where it forms part of the central protuberance. This Nitrosomonas europaea (strain ATCC 19718 / CIP 103999 / KCTC 2705 / NBRC 14298) protein is Large ribosomal subunit protein bL25.